A 173-amino-acid polypeptide reads, in one-letter code: MMCYDNSEMLSRQIDVMANDKPLMLTSPKQRQGGYFEQLACEFLQEQGLILIAKNWQRPKVGELDLVMLEKGQAWSTLVFIEVRQRNRSHFGDAALSVTAGKQRKIIKVARYFLHQHQKYSDYECRFDVIAYNTSNNKNSENETDIRLDNQLNQPLEKDQPEWLQGAFIASAW.

It belongs to the UPF0102 family.

This chain is UPF0102 protein Psyc_1908, found in Psychrobacter arcticus (strain DSM 17307 / VKM B-2377 / 273-4).